The chain runs to 199 residues: MIQISDKAQTYFRKLIEREGVPGMGVRLSAVDAGTPRADARLEFAEPADLSGDEWAIDCDGFTLYVVAASVPWMDGAEIDYVTQSTGNQQLTIKAPKIKGEAPAESASMVERVRWVVENEINPQLASHGGRVAVQEVSAEGVVLLRFGGGCHGCGMADVTLKQGIEKTLMGRVPGVTAVRDATDHATGDAPYIPRDSAA.

Cysteine 151 and cysteine 154 together coordinate [4Fe-4S] cluster.

Belongs to the NfuA family. Homodimer. Requires [4Fe-4S] cluster as cofactor.

Functionally, involved in iron-sulfur cluster biogenesis. Binds a 4Fe-4S cluster, can transfer this cluster to apoproteins, and thereby intervenes in the maturation of Fe/S proteins. Could also act as a scaffold/chaperone for damaged Fe/S proteins. The polypeptide is Fe/S biogenesis protein NfuA (Xanthomonas axonopodis pv. citri (strain 306)).